The chain runs to 724 residues: Probable metal-nicotianamine transporter YSL13 (724 aa).

A disordered region spans residues 1 to 54 (MATVPTPSEAHGGATPTAADVEMVEASELRRRGKPSGDRATGPSRDGAAAAAEE). The next 14 membrane-spanning stretches (helical) occupy residues 80–100 (AFVVSFFLVIMFSVIVMKLNL), 103–123 (GIIPSLNVSAGLLGFFFVRLW), 148–168 (CVVAGYDIAFSGGFGNYILSM), 190–210 (LGWIIGFLFLVSFIGLFGLVP), 252–272 (LGIFFILSFFWGFFQWFYTAT), 310–330 (IVNVSVLLGGILSWGIMWPLI), 355–375 (VFIAIALILGDGLYNFLKMII), 423–443 (IPWYVAYGGYAVVAAISIGTV), 455–475 (ILVAYIVAPILAFCNAYGTGL), 487–507 (LAIFAFGAWTGASHGGVLAGL), 541–561 (FVSQVIGTAMGCVIAPCVFWL), 603–623 (LNLCYAFFAAAIVVNLIRDLV), 640–660 (FYIGSYFAIDMFIGTVILFVW), and 675–695 (VASGMICGDGIWVLPQSVLAL).

This sequence belongs to the YSL (TC 2.A.67.2) family. In terms of tissue distribution, expressed in leaves and at low levels in root cortex.

The protein localises to the membrane. Functionally, may be involved in the transport of nicotianamine-chelated metals. The protein is Probable metal-nicotianamine transporter YSL13 (YSL13) of Oryza sativa subsp. japonica (Rice).